We begin with the raw amino-acid sequence, 250 residues long: Electron transport regulator A (250 aa).

Residues 164-237 (KNAEERLAAF…GKYIIIVDHH (74 aa)) enclose the HTH crp-type domain. Positions 197 to 216 (RGDIGNYLGLTVETISRLLG) form a DNA-binding region, H-T-H motif.

Monomer.

Its function is as follows. Regulates anaerobic growth on fumarate, nitrite, Fe(3+), TMAO, DMSO, thiosulfate and sulfite, but not on nitrate nor Mn(4+). The chain is Electron transport regulator A (etrA) from Shewanella oneidensis (strain ATCC 700550 / JCM 31522 / CIP 106686 / LMG 19005 / NCIMB 14063 / MR-1).